The following is a 35-amino-acid chain: MYDPPFLEALMITASFFAIFIIIVVSVLLLEGGGD.

The helical transmembrane segment at 10–30 (LMITASFFAIFIIIVVSVLLL) threads the bilayer.

It is found in the membrane. This is an uncharacterized protein from Salmonella typhimurium (strain LT2 / SGSC1412 / ATCC 700720).